Reading from the N-terminus, the 445-residue chain is Argininosuccinate synthase (445 aa).

Residues 17 to 25 and A43 each bind ATP; that span reads AFSGGLDTS. Position 99 (Y99) interacts with L-citrulline. Residues G129 and T131 each coordinate ATP. L-aspartate is bound by residues T131, N135, and D136. N135 is a binding site for L-citrulline. D136 is an ATP binding site. R139 and S192 together coordinate L-citrulline. D194 contacts ATP. L-citrulline is bound by residues T201, E203, and E280.

It belongs to the argininosuccinate synthase family. Type 2 subfamily. Homotetramer.

Its subcellular location is the cytoplasm. The enzyme catalyses L-citrulline + L-aspartate + ATP = 2-(N(omega)-L-arginino)succinate + AMP + diphosphate + H(+). It participates in amino-acid biosynthesis; L-arginine biosynthesis; L-arginine from L-ornithine and carbamoyl phosphate: step 2/3. This Herminiimonas arsenicoxydans protein is Argininosuccinate synthase.